The sequence spans 131 residues: MTTKRKPYVRPMTSTWWKKLPFYRFYMVREGTAVPTVWFSIVLIYGLFALKHGADSWAGYIGFLQNPVVVILNLITLAAALLHTKTWFELAPKAANVIIKGEKMGPEPVIKGLWVVTAVVTVVILFVALFW.

3 helical membrane passes run glutamate 30 to leucine 50, isoleucine 61 to leucine 81, and isoleucine 110 to phenylalanine 130.

This sequence belongs to the FrdC family. In terms of assembly, part of an enzyme complex containing four subunits: a flavoprotein (FrdA), an iron-sulfur protein (FrdB), and two hydrophobic anchor proteins (FrdC and FrdD).

The protein localises to the cell inner membrane. Its function is as follows. Two distinct, membrane-bound, FAD-containing enzymes are responsible for the catalysis of fumarate and succinate interconversion; fumarate reductase is used in anaerobic growth, and succinate dehydrogenase is used in aerobic growth. Anchors the catalytic components of the fumarate reductase complex to the cell inner membrane, binds quinones. The chain is Fumarate reductase subunit C from Klebsiella pneumoniae subsp. pneumoniae (strain ATCC 700721 / MGH 78578).